The sequence spans 197 residues: ATP-dependent Clp protease proteolytic subunit 2 (197 aa).

Catalysis depends on serine 96, which acts as the Nucleophile. Histidine 121 is an active-site residue.

It belongs to the peptidase S14 family. As to quaternary structure, fourteen ClpP subunits assemble into 2 heptameric rings which stack back to back to give a disk-like structure with a central cavity, resembling the structure of eukaryotic proteasomes.

Its subcellular location is the cytoplasm. It carries out the reaction Hydrolysis of proteins to small peptides in the presence of ATP and magnesium. alpha-casein is the usual test substrate. In the absence of ATP, only oligopeptides shorter than five residues are hydrolyzed (such as succinyl-Leu-Tyr-|-NHMec, and Leu-Tyr-Leu-|-Tyr-Trp, in which cleavage of the -Tyr-|-Leu- and -Tyr-|-Trp bonds also occurs).. Cleaves peptides in various proteins in a process that requires ATP hydrolysis. Has a chymotrypsin-like activity. Plays a major role in the degradation of misfolded proteins. In Synechococcus sp. (strain CC9605), this protein is ATP-dependent Clp protease proteolytic subunit 2.